A 415-amino-acid chain; its full sequence is Serine hydroxymethyltransferase (415 aa).

(6S)-5,6,7,8-tetrahydrofolate contacts are provided by residues L117 and 121 to 123 (GHL). K226 carries the post-translational modification N6-(pyridoxal phosphate)lysine. A (6S)-5,6,7,8-tetrahydrofolate-binding site is contributed by E241.

This sequence belongs to the SHMT family. In terms of assembly, homodimer. Pyridoxal 5'-phosphate is required as a cofactor.

It is found in the cytoplasm. It catalyses the reaction (6R)-5,10-methylene-5,6,7,8-tetrahydrofolate + glycine + H2O = (6S)-5,6,7,8-tetrahydrofolate + L-serine. Its pathway is one-carbon metabolism; tetrahydrofolate interconversion. It functions in the pathway amino-acid biosynthesis; glycine biosynthesis; glycine from L-serine: step 1/1. Catalyzes the reversible interconversion of serine and glycine with tetrahydrofolate (THF) serving as the one-carbon carrier. This reaction serves as the major source of one-carbon groups required for the biosynthesis of purines, thymidylate, methionine, and other important biomolecules. Also exhibits THF-independent aldolase activity toward beta-hydroxyamino acids, producing glycine and aldehydes, via a retro-aldol mechanism. This chain is Serine hydroxymethyltransferase, found in Bacillus pumilus (strain SAFR-032).